Reading from the N-terminus, the 124-residue chain is S-adenosylmethionine decarboxylase proenzyme (124 aa).

The active-site Schiff-base intermediate with substrate; via pyruvic acid is Ser63. Residue Ser63 is modified to Pyruvic acid (Ser); by autocatalysis. The active-site Proton acceptor; for processing activity is the His68. The Proton donor; for catalytic activity role is filled by Cys83.

It belongs to the prokaryotic AdoMetDC family. Type 1 subfamily. Heterotetramer of two alpha and two beta chains arranged as a dimer of alpha/beta heterodimers. Requires pyruvate as cofactor. Is synthesized initially as an inactive proenzyme. Formation of the active enzyme involves a self-maturation process in which the active site pyruvoyl group is generated from an internal serine residue via an autocatalytic post-translational modification. Two non-identical subunits are generated from the proenzyme in this reaction, and the pyruvate is formed at the N-terminus of the alpha chain, which is derived from the carboxyl end of the proenzyme. The post-translation cleavage follows an unusual pathway, termed non-hydrolytic serinolysis, in which the side chain hydroxyl group of the serine supplies its oxygen atom to form the C-terminus of the beta chain, while the remainder of the serine residue undergoes an oxidative deamination to produce ammonia and the pyruvoyl group blocking the N-terminus of the alpha chain.

It catalyses the reaction S-adenosyl-L-methionine + H(+) = S-adenosyl 3-(methylsulfanyl)propylamine + CO2. Its pathway is amine and polyamine biosynthesis; S-adenosylmethioninamine biosynthesis; S-adenosylmethioninamine from S-adenosyl-L-methionine: step 1/1. In terms of biological role, catalyzes the decarboxylation of S-adenosylmethionine to S-adenosylmethioninamine (dcAdoMet), the propylamine donor required for the synthesis of the polyamines spermine and spermidine from the diamine putrescine. This chain is S-adenosylmethionine decarboxylase proenzyme, found in Caldicellulosiruptor bescii (strain ATCC BAA-1888 / DSM 6725 / KCTC 15123 / Z-1320) (Anaerocellum thermophilum).